A 288-amino-acid polypeptide reads, in one-letter code: Probable syndecan (288 aa).

A signal peptide spans 1–26; sequence MILKLNFCLSTYSVLILLSLSTQAFA. Residues 27–231 are Extracellular-facing; the sequence is ANQAKTKVVP…ETLANGFYAA (205 aa). Residues 67–175 are disordered; that stretch reads EVNGSGYPTD…NIHNDEDFFT (109 aa). The N-linked (GlcNAc...) asparagine glycan is linked to Asn-69. Ser-71 and Ser-86 each carry an O-linked (Xyl...) (glycosaminoglycan) serine glycan. The span at 89-104 shows a compositional bias: polar residues; it reads PPSSATTKSDKVTSPS. Residues 106–124 are compositionally biased toward low complexity; it reads AVVTAKPTTVPTTTASFKP. Residues 141-164 are compositionally biased toward acidic residues; it reads VEEDEDDDEDEDEDDEDDEEDFAD. Ser-214 carries O-linked (Xyl...) (glycosaminoglycan) serine glycosylation. A helical membrane pass occupies residues 232 to 252; it reads IAGGVLVAVITAILLVLFVVF. At 253 to 288 the chain is on the cytoplasmic side; it reads RIRKKDEGSYALDEPKQARPYASYGYTKASTKEFYA.

This sequence belongs to the syndecan proteoglycan family.

The protein resides in the membrane. It localises to the cell surface. It is found in the cell junction. The protein localises to the cytoplasm. Cell surface proteoglycan that bears heparan sulfate. Required for correct mitotic spindle orientation of the ABar blastomere division plane and this may be through modulation of astral microtubule array, and in association with the wnt-signaling proteins mig-5 and dsh-2. Involved in the migration of AQR and PQR neurons, which descend from the Q neuroblasts. Promotes the axon guidance of D-type motor neurons. The chain is Probable syndecan from Caenorhabditis elegans.